The chain runs to 395 residues: Guanine nucleotide-binding protein subunit beta-5b (395 aa).

WD repeat units follow at residues 103–142 (GHGN…KEHA), 145–184 (MPCT…NENL), 193–234 (MHTN…QSFH), 235–276 (GHSA…NVQS), 279–318 (THDS…EVAI), 320–362 (SKDS…RVAI), and 365–395 (GHEN…RIWA).

The protein belongs to the WD repeat G protein beta family. In terms of assembly, may interact with RGS9; this interaction stabilizes both proteins and increases RGS9 GTPase-activating protein (GAP) activity, hence accelerating the deactivation of D(2) dopamine receptor-mediated signaling.

The protein localises to the membrane. Its function is as follows. Enhances GTPase-activating protein (GAP) activity of regulator of G protein signaling (RGS) proteins, such as RGS7 and RGS9, hence involved in the termination of the signaling initiated by the G protein coupled receptors (GPCRs) by accelerating the GTP hydrolysis on the G-alpha subunits, thereby promoting their inactivation. Increases RGS7 GTPase-activating protein (GAP) activity, thereby regulating mood and cognition. Increases RGS9 GTPase-activating protein (GAP) activity, hence contributes to the deactivation of G protein signaling initiated by D(2) dopamine receptors. Along with gnb5a, plays an important role in neuronal signaling, including in the parasympathetic, but not sympathetic, control of heart rate. This is Guanine nucleotide-binding protein subunit beta-5b from Danio rerio (Zebrafish).